The primary structure comprises 148 residues: Ubiquitin-conjugating enzyme E2 13 (148 aa).

Residues 2–148 (ALPKRIIKEI…AREWTKKYAV (147 aa)) form the UBC core domain. The active-site Glycyl thioester intermediate is C86.

Belongs to the ubiquitin-conjugating enzyme family. In terms of assembly, heterodimer with spm2.

The catalysed reaction is S-ubiquitinyl-[E1 ubiquitin-activating enzyme]-L-cysteine + [E2 ubiquitin-conjugating enzyme]-L-cysteine = [E1 ubiquitin-activating enzyme]-L-cysteine + S-ubiquitinyl-[E2 ubiquitin-conjugating enzyme]-L-cysteine.. The protein operates within protein modification; protein ubiquitination. Its function is as follows. Has a role in the DNA error-free postreplication repair (PRR) pathway. The ubc13/spm2 heterodimer catalyzes the synthesis of non-canonical poly-ubiquitin chains that are linked through 'Lys-63'. This Schizosaccharomyces pombe (strain 972 / ATCC 24843) (Fission yeast) protein is Ubiquitin-conjugating enzyme E2 13 (ubc13).